Consider the following 505-residue polypeptide: Lysine--tRNA ligase (505 aa).

Mg(2+) is bound by residues Glu-415 and Glu-422.

Belongs to the class-II aminoacyl-tRNA synthetase family. In terms of assembly, homodimer. The cofactor is Mg(2+).

The protein localises to the cytoplasm. The enzyme catalyses tRNA(Lys) + L-lysine + ATP = L-lysyl-tRNA(Lys) + AMP + diphosphate. The chain is Lysine--tRNA ligase from Escherichia coli O157:H7.